Here is a 414-residue protein sequence, read N- to C-terminus: Secreted beta-glucosidase sun1 (414 aa).

The first 19 residues, 1 to 19 (MKFNTVALTLATAGSLVTA), serve as a signal peptide directing secretion. An N-linked (GlcNAc...) asparagine glycan is attached at Asn-80. Residues 115-140 (TSASSSETVQTPAASSSSASSSSTAT) show a composition bias toward low complexity. Positions 115 to 141 (TSASSSETVQTPAASSSSASSSSTATG) are disordered. Residue Asn-377 is glycosylated (N-linked (GlcNAc...) asparagine).

It belongs to the SUN family. Highly glycosylated.

The protein resides in the secreted. It is found in the cell wall. Its function is as follows. Cell surface beta-glucosidase involved in cell wall biosynthesis and septation, and thus required for normal growth and correct hyphal morphogenesis. Has hydrolytic activity on linear (1-&gt;3)-beta-D-glucans such as laminaribiose and other laminarioligosaccharides. Also has a minor transferase activity. This Aspergillus fumigatus (strain ATCC MYA-4609 / CBS 101355 / FGSC A1100 / Af293) (Neosartorya fumigata) protein is Secreted beta-glucosidase sun1 (sun1).